Here is a 503-residue protein sequence, read N- to C-terminus: Lysine--tRNA ligase (503 aa).

The Mg(2+) site is built by Glu414 and Glu421.

Belongs to the class-II aminoacyl-tRNA synthetase family. In terms of assembly, homodimer. It depends on Mg(2+) as a cofactor.

It is found in the cytoplasm. The catalysed reaction is tRNA(Lys) + L-lysine + ATP = L-lysyl-tRNA(Lys) + AMP + diphosphate. In Laribacter hongkongensis (strain HLHK9), this protein is Lysine--tRNA ligase.